Reading from the N-terminus, the 476-residue chain is Raffinose invertase (476 aa).

Substrate is bound by residues 35–38 (WMND), glutamine 54, 97–98 (FS), 159–160 (RD), glutamate 214, and tryptophan 297. Residue aspartate 38 is part of the active site.

This sequence belongs to the glycosyl hydrolase 32 family. As to quaternary structure, homodimer.

The catalysed reaction is Hydrolysis of terminal non-reducing beta-D-fructofuranoside residues in beta-D-fructofuranosides.. May prevent the potential hasard of excessive sucrose accumulation. The protein is Raffinose invertase (rafD) of Escherichia coli.